Here is a 1601-residue protein sequence, read N- to C-terminus: Ras guanine nucleotide exchange factor glfB (1601 aa).

Disordered stretches follow at residues 43 to 140 (PLLA…KEWD), 188 to 256 (DLLI…TTTT), 310 to 461 (SPQR…APDS), and 475 to 630 (LTTT…VKKG). Pro residues predominate over residues 45–55 (LAPPAPPPPPT). The segment covering 57 to 69 (QEINIGSGNSTFI) has biased composition (polar residues). Over residues 70–126 (SSNNNNSNNNNNNNSNNNNNNNLNNSNNNNNNLNSNNNNNNNNNNNNNNGNNNNNSN) the composition is skewed to low complexity. The residue at position 197 (Ser197) is a Phosphoserine. Thr201 bears the Phosphothreonine mark. Low complexity-rich tracts occupy residues 211–256 (QQQQ…TTTT) and 310–330 (SPQR…GVVV). Over residues 331–359 (ADEESDSSEEESDSSEEESDEYTDEESET) the composition is skewed to acidic residues. Positions 384–398 (PLTSVNSNDNTSSGT) are enriched in polar residues. Composition is skewed to low complexity over residues 435–458 (TAVA…TTVA), 475–493 (LTTT…TQSI), and 500–520 (SQQR…AITK). Residues 521-533 (PTKDAKDKKDPAK) show a composition bias toward basic and acidic residues. The span at 558–577 (VPTGTSPPVSSSTSISSSTG) shows a compositional bias: low complexity. Residues 578 to 596 (IKKDKVKLSKEEKDRIKKE) show a composition bias toward basic and acidic residues. The region spanning 649–836 (VRLTQLVLSN…LIIDNYVFLF (188 aa)) is the Rho-GAP domain. The 133-residue stretch at 851-983 (GKMIISEGSI…TINDFLKLPK (133 aa)) folds into the N-terminal Ras-GEF domain. Residues 1021-1255 (SAMEIAEQCT…ADLSLKCEPP (235 aa)) enclose the Ras-GEF domain. The interval 1262 to 1601 (YNAPADIVDE…QESVPSTNAE (340 aa)) is N-terminal F-actin-binding domain. Residues 1443–1474 (SNVEKEKLSSSQEQQEQQEQKQQEQQQQQQEP) form a disordered region. The segment covering 1465–1474 (QEQQQQQQEP) has biased composition (low complexity).

As to quaternary structure, interacts with gpaB and rapA. Interacts directly with F-actin. Post-translationally, simultaneously phosphorylated at Ser-197 and Thr-201 after cAMP stimulation.

Its subcellular location is the cytoplasm. The protein resides in the cell cortex. The protein localises to the cytoskeleton. It localises to the cell projection. It is found in the filopodium. Its subcellular location is the lamellipodium. Functionally, gpaB-activated, rapA-specific guanine nucleotide exchange factor, involved in the regulation of the balance between Ras and Rap signaling at the leading edge of chemotaxing cells. Spatially localized activation of Rap and Ras induces F-actin polymerization at the leading edge of chemotaxing cells through the Rac, PI3K, and TORC2 pathways. Also acts as a key regulator of actin-driven membrane protrusions during processes such as phagocytosis and cytokinesis, possibly by modulating rapA signaling pathways. The protein is Ras guanine nucleotide exchange factor glfB of Dictyostelium discoideum (Social amoeba).